A 669-amino-acid chain; its full sequence is DNA mismatch repair protein MutL (669 aa).

Residues phenylalanine 356–serine 377 form a disordered region. Over residues asparagine 361 to serine 377 the composition is skewed to polar residues.

Belongs to the DNA mismatch repair MutL/HexB family.

This protein is involved in the repair of mismatches in DNA. It is required for dam-dependent methyl-directed DNA mismatch repair. May act as a 'molecular matchmaker', a protein that promotes the formation of a stable complex between two or more DNA-binding proteins in an ATP-dependent manner without itself being part of a final effector complex. This chain is DNA mismatch repair protein MutL, found in Staphylococcus aureus (strain MSSA476).